Consider the following 330-residue polypeptide: Glycerol-3-phosphate dehydrogenase [NAD(P)+] (330 aa).

Residues Ser-10, Trp-11, Arg-31, and Lys-105 each coordinate NADPH. Lys-105, Gly-135, and Ser-137 together coordinate sn-glycerol 3-phosphate. NADPH is bound at residue Ala-139. Positions 190, 243, 253, 254, and 255 each coordinate sn-glycerol 3-phosphate. Lys-190 (proton acceptor) is an active-site residue. Arg-254 serves as a coordination point for NADPH. Val-278 and Glu-280 together coordinate NADPH.

The protein belongs to the NAD-dependent glycerol-3-phosphate dehydrogenase family.

Its subcellular location is the cytoplasm. It carries out the reaction sn-glycerol 3-phosphate + NAD(+) = dihydroxyacetone phosphate + NADH + H(+). It catalyses the reaction sn-glycerol 3-phosphate + NADP(+) = dihydroxyacetone phosphate + NADPH + H(+). Its pathway is membrane lipid metabolism; glycerophospholipid metabolism. In terms of biological role, catalyzes the reduction of the glycolytic intermediate dihydroxyacetone phosphate (DHAP) to sn-glycerol 3-phosphate (G3P), the key precursor for phospholipid synthesis. The chain is Glycerol-3-phosphate dehydrogenase [NAD(P)+] from Oleidesulfovibrio alaskensis (strain ATCC BAA-1058 / DSM 17464 / G20) (Desulfovibrio alaskensis).